The primary structure comprises 128 residues: Fluoride-specific ion channel FluC (128 aa).

4 helical membrane-spanning segments follow: residues 4–24, 37–57, 72–92, and 101–121; these read LLLV…VGVQ, TFIV…WLAL, VGVM…ALMI, and FTYT…GLLI. 2 residues coordinate Na(+): Gly-76 and Thr-79.

The protein belongs to the fluoride channel Fluc/FEX (TC 1.A.43) family.

It localises to the cell inner membrane. It catalyses the reaction fluoride(in) = fluoride(out). With respect to regulation, na(+) is not transported, but it plays an essential structural role and its presence is essential for fluoride channel function. Fluoride-specific ion channel. Important for reducing fluoride concentration in the cell, thus reducing its toxicity. The chain is Fluoride-specific ion channel FluC from Caulobacter sp. (strain K31).